The chain runs to 402 residues: CCA-adding enzyme (402 aa).

ATP contacts are provided by Gly-32 and Arg-35. Residues Gly-32 and Arg-35 each contribute to the CTP site. Mg(2+) is bound by residues Asp-45 and Asp-47. Residues Arg-116, Asp-159, Arg-162, Arg-165, and Arg-168 each contribute to the ATP site. Residues Arg-116, Asp-159, Arg-162, Arg-165, and Arg-168 each contribute to the CTP site.

Belongs to the tRNA nucleotidyltransferase/poly(A) polymerase family. Bacterial CCA-adding enzyme type 3 subfamily. In terms of assembly, homodimer. The cofactor is Mg(2+).

It catalyses the reaction a tRNA precursor + 2 CTP + ATP = a tRNA with a 3' CCA end + 3 diphosphate. The catalysed reaction is a tRNA with a 3' CCA end + 2 CTP + ATP = a tRNA with a 3' CCACCA end + 3 diphosphate. Its function is as follows. Catalyzes the addition and repair of the essential 3'-terminal CCA sequence in tRNAs without using a nucleic acid template. Adds these three nucleotides in the order of C, C, and A to the tRNA nucleotide-73, using CTP and ATP as substrates and producing inorganic pyrophosphate. tRNA 3'-terminal CCA addition is required both for tRNA processing and repair. Also involved in tRNA surveillance by mediating tandem CCA addition to generate a CCACCA at the 3' terminus of unstable tRNAs. While stable tRNAs receive only 3'-terminal CCA, unstable tRNAs are marked with CCACCA and rapidly degraded. This is CCA-adding enzyme from Streptococcus pyogenes serotype M6 (strain ATCC BAA-946 / MGAS10394).